The chain runs to 564 residues: MLANSASVRILIKGGKVVNDDCTHEADVYIESGIIQQVGRELMIPGGAKVIDATGKLVIPGGIDTSTHFHQTFMNATCVDDFYHGTKAALVGGTTMIIGHVLPDKETSLVEAYEKCRALADPKVCCDYALHVGITWWAPKVKAEMETLVREKGVNSFQMFMTYKDLYMLRDSELYQVFHACRDIGAIPRVHAENGELVAEGAKEALDLGITGPEGIEISHPEELEAEATHRVITIANRTHCPIYLVNVSSISAGDVIAAAKMQGKVVLAETTNAHATLTGLHYYHQDWSHAAAYVTVPPLRLDTNTSTYLMSLLANDTLNIVASDHRPFTTKQKAMGKEDFTKIPHGVSGVQDRMSVVWERGVVGGKMDENRFVAVTSSNAAKILNLYPRKGRIIPGADADVVVWDPEATKTISASTQVQGGDFNLYENMRCHGVPLVTISRGRVVYENGVFMCAEGTGKFCPLRSFPDIVYKKLVQREKTLKVRGVDRTPYLGDVAIVVHPGKKEMGTPLADTPTRPVTRHGGMRDLHESSFSLSGSQIDDHVPKRASARILAPPGGRSSGIW.

Phosphothreonine occurs at positions 509 and 514. Serine 532 and serine 538 each carry phosphoserine. Arginine 559 is subject to Omega-N-methylarginine.

It belongs to the metallo-dependent hydrolases superfamily. Hydantoinase/dihydropyrimidinase family. As to quaternary structure, homotetramer, and heterotetramer with other DPYS-like proteins. Interacts with DPYSL2, DPYSL3 and DPYSL4. Interacts with SEPTIN4 isoform 4. Interacts with MAP2 and TUBB3. In terms of tissue distribution, detected in brain.

It localises to the cytoplasm. Its function is as follows. Involved in the negative regulation of dendrite outgrowth. In Mus musculus (Mouse), this protein is Dihydropyrimidinase-related protein 5 (Dpysl5).